We begin with the raw amino-acid sequence, 388 residues long: Alanine racemase (388 aa).

Lys39 (proton acceptor; specific for D-alanine) is an active-site residue. Residue Lys39 is modified to N6-(pyridoxal phosphate)lysine. The residue at position 129 (Lys129) is an N6-carboxylysine. Substrate is bound at residue Arg136. Residue Tyr265 is the Proton acceptor; specific for L-alanine of the active site. Met312 lines the substrate pocket.

Belongs to the alanine racemase family. In terms of assembly, homodimer. Requires pyridoxal 5'-phosphate as cofactor.

It catalyses the reaction L-alanine = D-alanine. It functions in the pathway amino-acid biosynthesis; D-alanine biosynthesis; D-alanine from L-alanine: step 1/1. Its activity is regulated as follows. Inhibited by acetate and propionate. Irreversibly inhibited by cycloserine. Catalyzes the interconversion of L-alanine and D-alanine. Also weakly active on serine. The sequence is that of Alanine racemase (alr) from Geobacillus stearothermophilus (Bacillus stearothermophilus).